The following is a 420-amino-acid chain: Interleukin-5 receptor subunit alpha (420 aa).

Positions M1 to A20 are cleaved as a signal peptide. The Extracellular portion of the chain corresponds to D21–W342. The region spanning P32–G123 is the Fibronectin type-III 1 domain. N35 and N131 each carry an N-linked (GlcNAc...) asparagine glycan. 2 cysteine pairs are disulfide-bonded: C134/C155 and C182/C196. N216 and N244 each carry an N-linked (GlcNAc...) asparagine glycan. A Fibronectin type-III 2 domain is found at P241–D334. An intrachain disulfide couples C269 to C316. A WSXWS motif motif is present at residues W322–S326. Residues F343–C362 traverse the membrane as a helical segment. At K363–F420 the chain is on the cytoplasmic side. Residues L371–K379 carry the Box 1 motif motif.

The protein belongs to the type I cytokine receptor family. Type 5 subfamily. Interacts with IL5. Interacts with CSF2RB. Interacts with JAK2. Interacts with SDCBP. In terms of tissue distribution, expressed on eosinophils and basophils.

It localises to the membrane. Functionally, cell surface receptor that plays an important role in the survival, differentiation, and chemotaxis of eosinophils. Acts by forming a heterodimeric receptor with CSF2RB subunit and subsequently binding to interleukin-5. In unstimulated conditions, interacts constitutively with JAK2. Heterodimeric receptor activation leads to JAK2 stimulation and subsequent activation of the JAK-STAT pathway. In Homo sapiens (Human), this protein is Interleukin-5 receptor subunit alpha (IL5RA).